The chain runs to 1475 residues: Amylopullulanase (1475 aa).

Positions 1-31 (MFKRRALGFLLAFLLVFTAVFGSMPMEFAKA) are cleaved as a signal peptide. Residues aspartate 245, asparagine 247, aspartate 285, aspartate 340, asparagine 398, aspartate 400, asparagine 403, aspartate 404, glycine 449, and aspartate 451 each coordinate Ca(2+). Positions 524 and 627 each coordinate substrate. Aspartate 629 serves as the catalytic Nucleophile. Catalysis depends on glutamate 658, which acts as the Proton donor. Residues 734-735 (HD), aspartate 794, and arginine 798 each bind substrate. Fibronectin type-III domains lie at 928-1019 (APQP…PAFP) and 1164-1257 (TPTA…TPDI). In terms of domain architecture, CBM20 spans 1255 to 1362 (PDIIPIKVTF…VNDTVQRWRD (108 aa)).

The protein belongs to the glycosyl hydrolase 13 family. Requires Ca(2+) as cofactor.

The catalysed reaction is Endohydrolysis of (1-&gt;4)-alpha-D-glucosidic linkages in polysaccharides containing three or more (1-&gt;4)-alpha-linked D-glucose units.. The enzyme catalyses Hydrolysis of (1-&gt;6)-alpha-D-glucosidic linkages in pullulan, amylopectin and glycogen, and in the alpha- and beta-limit dextrins of amylopectin and glycogen.. In Thermoanaerobacter thermohydrosulfuricus (Clostridium thermohydrosulfuricum), this protein is Amylopullulanase (apu).